Reading from the N-terminus, the 124-residue chain is Quinol oxidase subunit 4 (124 aa).

The next 3 membrane-spanning stretches (helical) occupy residues 16–36 (IVGF…AVYT), 44–64 (LWII…MFMH), and 78–98 (TLFG…IFAA).

It belongs to the cytochrome c oxidase bacterial subunit 4 family.

The protein resides in the cell membrane. It catalyses the reaction 2 a quinol + O2 = 2 a quinone + 2 H2O. Functionally, catalyzes quinol oxidation with the concomitant reduction of oxygen to water. Major component for energy conversion during vegetative growth. In Bacillus subtilis (strain 168), this protein is Quinol oxidase subunit 4 (qoxD).